We begin with the raw amino-acid sequence, 503 residues long: Probable folate-biopterin transporter 6 (503 aa).

Transmembrane regions (helical) follow at residues 56-76, 101-121, 128-148, 153-173, 194-214, 221-241, 281-301, 314-334, 344-364, 369-389, 404-424, and 450-470; these read SFVL…GSIF, LYYI…VFPI, PYFV…VVLG, ALAL…DVVI, LCMV…GVFV, GALG…FFIY, LYMF…FYWY, FVGI…LIYH, NILF…LVFI, LTLG…TKMI, LCPL…DSFG, and WLVI…VFLV.

Belongs to the major facilitator superfamily. Folate-biopterin transporter (TC 2.A.71) family.

Its subcellular location is the membrane. In terms of biological role, could mediate folate transport. This Arabidopsis thaliana (Mouse-ear cress) protein is Probable folate-biopterin transporter 6.